Here is a 699-residue protein sequence, read N- to C-terminus: MAREVPIEKLRNIGIVAHIDAGKTTTTERIPTTGKDIQIGEVTEGAATMDWMPQEKERGITITAATTACYWTRNGERYQINIIDTPGHVDFSVEVVRSMKVLDGIVFIFSAVEGVQPQSEANWRWADRFKVPRIAFINKMDRLGADFYRVFKEIEEKLTIKPVAIQIPLGAEDQFEGVIDLMEMKAIRWLEVTLGAKYEVIDIPPGYQEKAQEWREKMIETIVETDDELMEKYLEAQEITLEELRKALRKATINRQLVPVLCGSAFKNKGVQPLLDAVIVTYPLPIDLPPVKGTNPNTGEEEERRPLDEEPFCAYAFKVMADPYAGQLTYIRVFSGTLKAGSYVYNATRDEKQRAGRLLLMHANSREEIQQVSAGEICAVVGLDAATGDTLCDEKHPIILEKLEFPDPVISMAIEPKTKKDQEKLSQVLNLSSLKEDPTFRATTDPETGQILIHGMGELHLEIMVDRMRREYGIEVNVGKPQVAYKETIRKKAIGEGKFIKQTGGRGQYGHAIIEIEPLPRGKGFEFIDDIHGGVIPKEFIPSVEKGVKEAMQNGILAGYPVVDVRVRLFDGSYHEVDSSDIAFQVAGSLAFKDAAKKADPVLLEPIMEVEVETPEDYVGDVIGDLNSRRGTIMGMENKGNITVVKAHVPLAEMFGYATTLRSLTQGRGTFIMRFSHYDEVPQHIAEKIIGERMAGKSS.

In terms of domain architecture, tr-type G spans 8-286 (EKLRNIGIVA…AVIVTYPLPI (279 aa)). GTP is bound by residues 17-24 (AHIDAGKT), 84-88 (DTPGH), and 138-141 (NKMD).

The protein belongs to the TRAFAC class translation factor GTPase superfamily. Classic translation factor GTPase family. EF-G/EF-2 subfamily.

It is found in the cytoplasm. In terms of biological role, catalyzes the GTP-dependent ribosomal translocation step during translation elongation. During this step, the ribosome changes from the pre-translocational (PRE) to the post-translocational (POST) state as the newly formed A-site-bound peptidyl-tRNA and P-site-bound deacylated tRNA move to the P and E sites, respectively. Catalyzes the coordinated movement of the two tRNA molecules, the mRNA and conformational changes in the ribosome. The sequence is that of Elongation factor G (fusA) from Aquifex pyrophilus.